We begin with the raw amino-acid sequence, 283 residues long: Methylamine utilization ferredoxin-type protein MauN (283 aa).

4Fe-4S ferredoxin-type domains follow at residues 208 to 239 and 241 to 270; these read LRVTAEQSGSCAGCGSCIRVCPEPHVLAPVVS and KANTVTHGDCTRCGACLDQCATGALAMKLD. Cys-218, Cys-221, Cys-224, Cys-228, Cys-250, Cys-253, Cys-256, and Cys-260 together coordinate [4Fe-4S] cluster.

It functions in the pathway one-carbon metabolism; methylamine degradation. Involved in electron transfer. In Methylobacillus flagellatus (strain ATCC 51484 / DSM 6875 / VKM B-1610 / KT), this protein is Methylamine utilization ferredoxin-type protein MauN (mauN).